The primary structure comprises 443 residues: Chromosomal replication initiator protein DnaA (443 aa).

A domain I, interacts with DnaA modulators region spans residues 1–80; sequence MFLEEKLNLV…ETCGDKIPVE (80 aa). The interval 80–104 is domain II; it reads EILIETKAASPLQSILEKSFDQKDF. A domain III, AAA+ region region spans residues 105–321; sequence QFNPDYTFET…GALNDIYLYK (217 aa). 4 residues coordinate ATP: Gly148, Gly150, Lys151, and Thr152. The segment at 322–443 is domain IV, binds dsDNA; sequence KSYSLLFLNL…ERISSKYKLQ (122 aa).

Belongs to the DnaA family. As to quaternary structure, oligomerizes as a right-handed, spiral filament on DNA at oriC.

It localises to the cytoplasm. Functionally, plays an essential role in the initiation and regulation of chromosomal replication. ATP-DnaA binds to the origin of replication (oriC) to initiate formation of the DNA replication initiation complex once per cell cycle. Binds the DnaA box (a 9 base pair repeat at the origin) and separates the double-stranded (ds)DNA. Forms a right-handed helical filament on oriC DNA; dsDNA binds to the exterior of the filament while single-stranded (ss)DNA is stabiized in the filament's interior. The ATP-DnaA-oriC complex binds and stabilizes one strand of the AT-rich DNA unwinding element (DUE), permitting loading of DNA polymerase. After initiation quickly degrades to an ADP-DnaA complex that is not apt for DNA replication. Binds acidic phospholipids. This Leptospira interrogans serogroup Icterohaemorrhagiae serovar copenhageni (strain Fiocruz L1-130) protein is Chromosomal replication initiator protein DnaA.